A 230-amino-acid polypeptide reads, in one-letter code: Porin OmpL (230 aa).

An N-terminal signal peptide occupies residues 1 to 20 (MKSLNTLVILTSVISTSVFA).

It belongs to the oligogalacturonate-specific porin KdgM (TC 1.B.35) family. OmpL subfamily.

The protein resides in the cell outer membrane. In terms of biological role, outer membrane channel protein that allows an efficient diffusion of low-molecular-weight solutes such as small sugars and tetraglycine. However, the specific substrate recognized by the OmpL channel is unknown. The sequence is that of Porin OmpL (ompL) from Salmonella typhi.